Reading from the N-terminus, the 404-residue chain is Acetate kinase (404 aa).

Residue Asn-8 participates in Mg(2+) binding. Lys-15 is a binding site for ATP. A substrate-binding site is contributed by Arg-92. Asp-149 serves as the catalytic Proton donor/acceptor. ATP contacts are provided by residues 207 to 211, 282 to 284, and 327 to 331; these read HLGSG, DMR, and GIGEN. Residue Glu-378 coordinates Mg(2+).

The protein belongs to the acetokinase family. Homodimer. Requires Mg(2+) as cofactor. It depends on Mn(2+) as a cofactor.

It is found in the cytoplasm. It carries out the reaction acetate + ATP = acetyl phosphate + ADP. The protein operates within metabolic intermediate biosynthesis; acetyl-CoA biosynthesis; acetyl-CoA from acetate: step 1/2. Its function is as follows. Catalyzes the formation of acetyl phosphate from acetate and ATP. Can also catalyze the reverse reaction. This chain is Acetate kinase, found in Nitrobacter hamburgensis (strain DSM 10229 / NCIMB 13809 / X14).